A 429-amino-acid chain; its full sequence is Probable M18 family aminopeptidase 2 (429 aa).

His-82, His-156, and His-401 together coordinate Zn(2+).

Belongs to the peptidase M18 family. The cofactor is Zn(2+).

The protein is Probable M18 family aminopeptidase 2 of Pseudomonas putida (strain ATCC 700007 / DSM 6899 / JCM 31910 / BCRC 17059 / LMG 24140 / F1).